The sequence spans 151 residues: Large ribosomal subunit protein uL15 (151 aa).

Residues 1–60 (MAENNPLKIHNLRPAPGAKTAKTRVGRGEASKGKTAGRGTKGTKARYQVPERFEGGQMPL) are disordered.

This sequence belongs to the universal ribosomal protein uL15 family. As to quaternary structure, part of the 50S ribosomal subunit.

Its function is as follows. Binds to the 23S rRNA. In Streptomyces coelicolor (strain ATCC BAA-471 / A3(2) / M145), this protein is Large ribosomal subunit protein uL15.